We begin with the raw amino-acid sequence, 39 residues long: Photosystem II reaction center protein J (39 aa).

Residues 7–27 (IPLWLIATVGGTAALTVVGLF) traverse the membrane as a helical segment.

It belongs to the PsbJ family. As to quaternary structure, PSII is composed of 1 copy each of membrane proteins PsbA, PsbB, PsbC, PsbD, PsbE, PsbF, PsbH, PsbI, PsbJ, PsbK, PsbL, PsbM, PsbT, PsbX, PsbY, PsbZ, Psb30/Ycf12, at least 3 peripheral proteins of the oxygen-evolving complex and a large number of cofactors. It forms dimeric complexes.

The protein localises to the plastid. Its subcellular location is the chloroplast thylakoid membrane. Its function is as follows. One of the components of the core complex of photosystem II (PSII). PSII is a light-driven water:plastoquinone oxidoreductase that uses light energy to abstract electrons from H(2)O, generating O(2) and a proton gradient subsequently used for ATP formation. It consists of a core antenna complex that captures photons, and an electron transfer chain that converts photonic excitation into a charge separation. In Rhodomonas salina (Cryptomonas salina), this protein is Photosystem II reaction center protein J.